A 466-amino-acid polypeptide reads, in one-letter code: Amino acid permease 4 (466 aa).

Topologically, residues 1-22 (MDVPRPAFKCFDDDGRLKRSGT) are cytoplasmic. The next 2 membrane-spanning stretches (helical) occupy residues 23-43 (VWTA…LSLA) and 44-64 (WAIG…FSFV). Residues 65–111 (TYYSSTLLSDCYRTGDPVSGKRNYTYMDAVRSILGGFRFKICGLIQY) are Cytoplasmic-facing. The helical transmembrane segment at 112 to 132 (LNLFGITVGYTIAASISMMAI) threads the bilayer. The Extracellular portion of the chain corresponds to 133–177 (KRSNCFHESGGKNPCHMSSNPYMIMFGVTEILLSQIKDFDQIWWL). Residues 178-198 (SIVAAIMSFTYSAIGLALGII) traverse the membrane as a helical segment. The Cytoplasmic portion of the chain corresponds to 199 to 226 (QVAANGVVKGSLTGISIGAVTQTQKIWR). Residues 227 to 247 (TFQALGDIAFAYSYSVVLIEI) traverse the membrane as a helical segment. Over 248–266 (QDTVRSPPAESKTMKIATR) the chain is Extracellular. Residues 267–287 (ISIAVTTTFYMLCGCMGYAAF) form a helical membrane-spanning segment. Residues 288–290 (GDK) are Cytoplasmic-facing. A helical transmembrane segment spans residues 291–311 (APGNLLTGFGFYNPFWLLDVA). Residues 312–313 (NA) are Extracellular-facing. A helical transmembrane segment spans residues 314–334 (AIVIHLVGAYQVFAQPIFAFI). At 335–369 (EKQAAARFPDSDLVTKEYEIRIPGFRSPYKVNVFR) the chain is on the cytoplasmic side. A helical membrane pass occupies residues 370 to 390 (AVYRSGFVVLTTVISMLMPFF). Residues 391-392 (ND) are Extracellular-facing. A helical membrane pass occupies residues 393–413 (VVGILGALGFWPLTVYFPVEM). Over 414–435 (YIRQRKVERWSMKWVCLQMLSC) the chain is Cytoplasmic. Residues 436 to 456 (GCLMITLVAGVGSIAGVMLDL) traverse the membrane as a helical segment. Over 457 to 466 (KVYKPFKTTY) the chain is Extracellular.

This sequence belongs to the amino acid/polyamine transporter 2 family. Amino acid/auxin permease (AAAP) (TC 2.A.18.2) subfamily. Expressed in leaves, stems and flowers.

It is found in the cell membrane. Its activity is regulated as follows. Inhibited by 2,4-dinitrophenol. Amino acid-proton symporter. Stereospecific transporter with a broad specificity for neutral amino acids, favoring small amino acids such as alanine, asparagine and glutamine. Also accepts large aromatic residues such as in phenlalanine or tyrosine. In Arabidopsis thaliana (Mouse-ear cress), this protein is Amino acid permease 4 (AAP4).